The primary structure comprises 1203 residues: Delphilin (1203 aa).

A PDZ 1 domain is found at 1-79 (MPATNQGWPE…VPPSLGVLPG (79 aa)). Residue Ala-3 is the site of S-palmitoyl cysteine attachment. Positions 215-270 (GAQRLRRSRSEERPERLLVSTRASAAPRRPDEPPPRKATSLLGGRTGPGGPRRTVR) are disordered. Positions 231 to 241 (LLVSTRASAAP) are enriched in low complexity. One can recognise a PDZ 2 domain in the interval 268–345 (TVRVYKGNKS…MPTLVVEEGP (78 aa)). Ser-303 is modified (phosphoserine). Disordered regions lie at residues 466–541 (ESSL…TPNP), 563–586 (IGTM…GPRT), 611–656 (LASP…PPSR), and 710–821 (SFVT…SHMS). The span at 500 to 509 (RSQGLETSLS) shows a compositional bias: polar residues. Residues Ser-572, Ser-613, Ser-644, and Ser-647 each carry the phosphoserine modification. Residues 611 to 625 (LASPSSSESHPYASL) are compositionally biased toward low complexity. The span at 715–740 (ERSSASECVSSSEEGSSLTYSSISDH) shows a compositional bias: low complexity. The segment covering 741–756 (IPPPPLSPPPPPPLPF) has biased composition (pro residues). Polar residues predominate over residues 774-784 (QSLTKPLTQIN). Residues 786–803 (PVPPPPPPPLPPPVPCAP) show a composition bias toward pro residues. Residues 812 to 1203 (HRRSETSHMS…SSGMVSPLAW (392 aa)) enclose the FH2 domain.

In terms of assembly, interacts with C-terminus of the glutamate receptor GRID2 via PDZ domain. Isoform 2 also interacts with Profilin-2/PFN2 and with the monocarboxylate transporter SLC16A7 via PDZ domain. The interaction of isoform 2 with GRID2 is dependent on GRID2 phosphorylation by PKA. Post-translationally, isoform 2 is palmitoylated. Palmitoylation of isoform 2 is necessary for the enhanced cell surface expression of GRID2, and is also responsible for the accumulation of isoform 2 within dendritic spines. Isoform 1 and isoform 2 are differentially localized, probably modulating GRID2 signaling in neurons. As to expression, isoform 1 is expressed in the cerebellum, but not in the cerebral cortex. Isoform 2 is expressed in the cell body of purkinge cells of the cerebellum and weakly expressed in the cerebrum and the brainstem as well as various nuclei of the thalamus. Isoform 2 is highly expressed in the cerebral cortex than in the cerebellum. Isoform 3 is expressed in the cerebellum and cerebrum.

It localises to the postsynaptic cell membrane. The protein localises to the cell projection. Its subcellular location is the dendritic spine. It is found in the synapse. The protein resides in the cell membrane. In terms of biological role, postsynaptic scaffolding protein at the Purkinje cell synapse, where it may serve to link GRID2 with actin cytoskeleton and various signaling molecules. This Mus musculus (Mouse) protein is Delphilin (Grid2ip).